A 494-amino-acid chain; its full sequence is Maintenance of mitochondrial morphology protein 1 (494 aa).

The Lumenal portion of the chain corresponds to 1–22 (MSSQPGDPATLPAQSSLSFTQG). The chain crosses the membrane as a helical span at residues 23–43 (FLLGQLSVVLVLAAFIKFFIF). Residues 44 to 494 (GEAPPPPSRG…GSLPEAVTPG (451 aa)) lie on the Cytoplasmic side of the membrane. 4 disordered regions span residues 50-98 (PSRG…SSST), 274-330 (PPLD…KSNV), 398-426 (VRTGDDAETASNGPRSTVSADIGGSARHE), and 449-494 (VASR…VTPG). Residues 54–64 (LSHRSATHRRS) show a composition bias toward basic residues. Polar residues-rich tracts occupy residues 65-76 (NSIYSNSPQEAG) and 85-98 (STSNVLRPVPSSST). In terms of domain architecture, SMP-LTD spans 130-387 (QPESLDWFNV…EPRVQVVGLP (258 aa)). The span at 274–286 (PPLDTPSHSPSPP) shows a compositional bias: pro residues. 2 stretches are compositionally biased toward polar residues: residues 406–416 (TASNGPRSTVS) and 466–477 (RSMTRQESSGDL).

Belongs to the MMM1 family. As to quaternary structure, homodimer. Component of the ER-mitochondria encounter structure (ERMES) or MDM complex, composed of mmm1, mdm10, mdm12 and mdm34. A mmm1 homodimer associates with one molecule of mdm12 on each side in a pairwise head-to-tail manner, and the SMP-LTD domains of mmm1 and mdm12 generate a continuous hydrophobic tunnel for phospholipid trafficking.

Its subcellular location is the endoplasmic reticulum membrane. Component of the ERMES/MDM complex, which serves as a molecular tether to connect the endoplasmic reticulum (ER) and mitochondria. Components of this complex are involved in the control of mitochondrial shape and protein biogenesis, and function in nonvesicular lipid trafficking between the ER and mitochondria. The mdm12-mmm1 subcomplex functions in the major beta-barrel assembly pathway that is responsible for biogenesis of all outer membrane beta-barrel proteins, and acts in a late step after the SAM complex. The mdm10-mdm12-mmm1 subcomplex further acts in the TOM40-specific pathway after the action of the mdm12-mmm1 complex. Essential for establishing and maintaining the structure of mitochondria and maintenance of mtDNA nucleoids. The protein is Maintenance of mitochondrial morphology protein 1 of Aspergillus clavatus (strain ATCC 1007 / CBS 513.65 / DSM 816 / NCTC 3887 / NRRL 1 / QM 1276 / 107).